A 66-amino-acid chain; its full sequence is Beta-toxin Cb1 (66 aa).

Positions 1 to 66 constitute an LCN-type CS-alpha/beta domain; the sequence is KEGYIVNHST…VWPLPKKTCN (66 aa). 4 disulfide bridges follow: Cys12–Cys65, Cys16–Cys41, Cys25–Cys46, and Cys29–Cys48.

Belongs to the long (4 C-C) scorpion toxin superfamily. Sodium channel inhibitor family. Beta subfamily. In terms of tissue distribution, expressed by the venom gland.

It localises to the secreted. Inhibited by human antibodies scFvs 10FG2 and LR. In terms of biological role, beta toxins bind voltage-independently at site-4 of sodium channels (Nav) and reduces peak current and shifts the voltage of activation toward more negative potentials thereby affecting sodium channel activation and promoting spontaneous and repetitive firing. Has an inhibitory effect on voltage-gated sodium channel hNav1.6/SCN8A, affecting both the activation and inactivation processes. This toxin is active against mammals and lethal to mice. The polypeptide is Beta-toxin Cb1 (Centruroides baergi (Scorpion)).